The chain runs to 282 residues: 2-dehydro-3-deoxyphosphooctonate aldolase (282 aa).

The protein belongs to the KdsA family.

The protein localises to the cytoplasm. It carries out the reaction D-arabinose 5-phosphate + phosphoenolpyruvate + H2O = 3-deoxy-alpha-D-manno-2-octulosonate-8-phosphate + phosphate. It functions in the pathway carbohydrate biosynthesis; 3-deoxy-D-manno-octulosonate biosynthesis; 3-deoxy-D-manno-octulosonate from D-ribulose 5-phosphate: step 2/3. The protein operates within bacterial outer membrane biogenesis; lipopolysaccharide biosynthesis. This Granulibacter bethesdensis (strain ATCC BAA-1260 / CGDNIH1) protein is 2-dehydro-3-deoxyphosphooctonate aldolase.